The primary structure comprises 339 residues: STEAP1 protein (339 aa).

Transmembrane regions (helical) follow at residues 71–91 (WHLPIKIAAIIASLTFLYTLL) and 119–139 (PMVSITLLALVYLPGVIAAIV). One can recognise a Ferric oxidoreductase domain in the interval 118 to 265 (LPMVSITLLA…KLGIVSLLLG (148 aa)). 2 residues coordinate FAD: Q140 and R161. Transmembrane regions (helical) follow at residues 164–184 (FGLLSFFFAVLHAIYSLSYPM) and 218–238 (IYVSLGIVGLAILALLAVTSI). H175 serves as a coordination point for heme b. S237 and Q254 together coordinate FAD. 2 consecutive transmembrane segments (helical) span residues 258 to 278 (GIVSLLLGTIHALIFAWNKWI) and 291 to 311 (FMIAVFLPIVVLIFKSILFLP). Residue H268 participates in heme b binding.

It belongs to the STEAP family. In terms of assembly, homotrimer. FAD serves as cofactor. It depends on heme b as a cofactor. In terms of tissue distribution, ubiquitously expressed. Highly expressed in prostate tumors.

The protein localises to the endosome membrane. It localises to the cell membrane. In terms of biological role, does not function as a metalloreductase due to the absence of binding sites for the electron-donating substrate NADPH. Promotes Fe(3+) reduction when fused to the NADPH-binding domain of STEAP4. In Homo sapiens (Human), this protein is STEAP1 protein (STEAP1).